We begin with the raw amino-acid sequence, 231 residues long: NADH-ubiquinone oxidoreductase chain 4 (231 aa).

The next 6 membrane-spanning stretches (helical) occupy residues 1–21 (PIAGSMVLAAILLKLGGYGII), 34–54 (MFLPFLVLALWGAILANLTCL), 63–85 (IAYSSISHMGLVVAAIIIQTPWG), 89–111 (AMALMVAHGFTSSSLFCLANTTY), 128–148 (ILPMATTWWLLANLLNIATPP), and 156–176 (LLIMSALFNWCPTTIILLGLS).

Belongs to the complex I subunit 4 family.

It is found in the mitochondrion membrane. The enzyme catalyses a ubiquinone + NADH + 5 H(+)(in) = a ubiquinol + NAD(+) + 4 H(+)(out). Functionally, core subunit of the mitochondrial membrane respiratory chain NADH dehydrogenase (Complex I) that is believed to belong to the minimal assembly required for catalysis. Complex I functions in the transfer of electrons from NADH to the respiratory chain. The immediate electron acceptor for the enzyme is believed to be ubiquinone. This is NADH-ubiquinone oxidoreductase chain 4 (MT-ND4) from Bothriechis lateralis (Side-striped palm pitviper).